The chain runs to 184 residues: ATP-dependent protease subunit HslV (184 aa).

T12 is an active-site residue. The Na(+) site is built by A166, C169, and T172.

Belongs to the peptidase T1B family. HslV subfamily. A double ring-shaped homohexamer of HslV is capped on each side by a ring-shaped HslU homohexamer. The assembly of the HslU/HslV complex is dependent on binding of ATP.

It is found in the cytoplasm. The catalysed reaction is ATP-dependent cleavage of peptide bonds with broad specificity.. Its activity is regulated as follows. Allosterically activated by HslU binding. Its function is as follows. Protease subunit of a proteasome-like degradation complex believed to be a general protein degrading machinery. In Brucella abortus (strain S19), this protein is ATP-dependent protease subunit HslV.